Reading from the N-terminus, the 1470-residue chain is Transient receptor potential cation channel subfamily M member 2 (1470 aa).

The Cytoplasmic segment spans residues 1-725 (MDEAALEPTL…GELSVDNPHW (725 aa)). Residues Tyr267, Arg274, 305–308 (GPGT), and Arg330 each bind ADP-D-ribose. An intramembrane segment occupies 726–738 (KVLLCMIFFPLIY). At 739–808 (TGFLTFRRDE…MSFLKSPQVK (70 aa)) the chain is on the cytoplasmic side. Residues 809–829 (FYWNIASYFGFLWLFAVVLMI) form a helical membrane-spanning segment. Residues 830-836 (DFQTSPS) are Extracellular-facing. Residues 837-857 (WRELLLYVWLTSLVCEEIRQL) form a helical membrane-spanning segment. Ca(2+) is bound by residues Glu853 and Gln856. Residues 858–876 (YHDFDGSGFRRKAKMYIKD) lie on the Cytoplasmic side of the membrane. Residues 877–897 (LWNILDVLSIVLFIAGLICRL) traverse the membrane as a helical segment. Residue Asn879 coordinates Ca(2+). Over 898–905 (QASDTVFY) the chain is Extracellular. Residues 906–926 (IGKVILCIDFIIFCLRLMAIF) traverse the membrane as a helical segment. At 927–941 (SISRTLGPKIIIVRR) the chain is on the cytoplasmic side. A helical transmembrane segment spans residues 942–968 (MMLDLFFFMFLLSIWVVAYGVAKQGIL). At 969 to 977 (IENEERLNW) the chain is on the extracellular side. Residues 978–1002 (IIRGAVYEPYITIFGNFPTNIDNTL) constitute an intramembrane region (pore-forming). The short motif at 991 to 993 (FGN) is the Selectivity filter element. Topologically, residues 1003–1034 (FDISSCSVNASDPLKPKCPMLNADNTPVFPEW) are extracellular. Cys1008 and Cys1020 are joined by a disulfide. Asn1011 carries an N-linked (GlcNAc...) asparagine glycan. Residues 1035-1059 (LTIMMLCVYLLFANILLLNLLIAIF) traverse the membrane as a helical segment. The Cytoplasmic portion of the chain corresponds to 1060–1087 (NYTFQEVQDNTDTIWKFQRYELIKEYHS). Glu1084 contacts Ca(2+). The stretch at 1088–1105 (RPALPPPFILLSHLILFI) is an intramembrane region. Residues 1106 to 1470 (RGVFLRDLPQ…QIAHHHNTYF (365 aa)) are Cytoplasmic-facing. The segment at 1157-1470 (HRIHDTAEKV…QIAHHHNTYF (314 aa)) is divergent Nudix hydrolase-like domain. Disordered regions lie at residues 1215–1256 (KSKV…LQYP) and 1281–1314 (PPVYNQQDSSESDTSALDKHRNPGGRTGIRGKGA). Over residues 1231 to 1244 (DDGDSSGQETDDEE) the composition is skewed to acidic residues. Positions 1283-1295 (VYNQQDSSESDTS) are enriched in polar residues. The ADP-D-ribose site is built by Asp1398 and Arg1400.

This sequence belongs to the transient receptor (TC 1.A.4) family. LTrpC subfamily. TRPM2 sub-subfamily. As to quaternary structure, homotetramer.

The protein localises to the cell membrane. The catalysed reaction is Ca(2+)(in) = Ca(2+)(out). It catalyses the reaction Na(+)(in) = Na(+)(out). Activated by intracellular ADP-ribose. Ca(2+) and PI(4,5)P2 are required for channel opening by ADP-ribose. Functionally, nonselective, voltage-independent cation channel that mediates Ca(2+) influx, leading to increased cytoplasmic Ca(2+) levels. Functions as a ligand-gated ion channel, gated by intracellular adenosine diphosphate ribose (ADP-ribose), Ca(2+), warm temperature, and oxidative stress. Binding of ADP-ribose to the cytoplasmic N-terminal region causes a conformation change; the channel is primed but still requires Ca(2+) binding to trigger channel opening. The protein is Transient receptor potential cation channel subfamily M member 2 of Danio rerio (Zebrafish).